The primary structure comprises 65 residues: Hainantoxin-X.3 (65 aa).

Positions 1 to 20 (MNMKILVLVAVLCLVVSTHA) are cleaved as a signal peptide. Positions 21 to 37 (ERHSKTDMGDSPMIQER) are excised as a propeptide. Intrachain disulfides connect cysteine 39–cysteine 56, cysteine 46–cysteine 59, and cysteine 55–cysteine 64.

It belongs to the neurotoxin 36 family. 02 subfamily. Expressed by the venom gland.

Its subcellular location is the secreted. In terms of biological role, reversibly blocks N-type calcium channels (Cav2.2/CACNA1B) in rat dorsal root ganglion cells. Elicits no toxic symptoms in either vertebrates or invertebrates during a period of 48 hours post-injection, when it was assayed in vivo by direct injection into mice and cockroaches. The protein is Hainantoxin-X.3 of Cyriopagopus hainanus (Chinese bird spider).